The chain runs to 86 residues: Omega-theraphotoxin-Hhn1f 2 (86 aa).

Residues 1–21 form the signal peptide; the sequence is MKSIVFVALFGLALLAVVCSA. The propeptide occupies 22 to 50; the sequence is SEDAHKELLKEVVRAVVVDKTDAVQAEER. Cystine bridges form between cysteine 52–cysteine 66, cysteine 59–cysteine 71, and cysteine 65–cysteine 78.

This sequence belongs to the neurotoxin 10 (Hwtx-1) family. 17 (Hntx-9) subfamily. As to expression, expressed by the venom gland.

It localises to the secreted. Ion channel inhibitor. The polypeptide is Omega-theraphotoxin-Hhn1f 2 (Cyriopagopus hainanus (Chinese bird spider)).